Consider the following 257-residue polypeptide: Cytoplasmic envelopment protein 1 (257 aa).

It belongs to the herpesviridae cytoplasmic envelopment protein 1 family.

Its subcellular location is the virion. It localises to the virion tegument. The protein resides in the host cytoplasm. The protein localises to the host Golgi apparatus. Functionally, plays a critical role in cytoplasmic virus egress. Participates in the final step of tegumentation and envelope acquisition within the host cytoplasm. This Connochaetes taurinus (Blue wildebeest) protein is Cytoplasmic envelopment protein 1 (42).